The primary structure comprises 877 residues: Oligopeptide transporter 2 (877 aa).

At 1 to 167 (MSETVKDKVI…DPTIPVETFR (167 aa)) the chain is on the cytoplasmic side. Residues 168-188 (AYFLAIIWSVIGSGFNEFFSH) form a helical membrane-spanning segment. Arginine 189 is a topological domain (extracellular). A helical transmembrane segment spans residues 190–210 (VVSISLNTPIIQMFLYICGKA). The Cytoplasmic portion of the chain corresponds to 211 to 240 (WAKTIPCWTITIRGRKYGINIDKPWTQKEQ). Residues 241–261 (MFSTLLYAICQGAFYTHYNIL) form a helical membrane-spanning segment. The Extracellular portion of the chain corresponds to 262–272 (TQKLFYHSAFS). The helical transmembrane segment at 273–293 (FGYQFLLSLSVQFIGFGFAGI) threads the bilayer. Topologically, residues 294-334 (LRKFVVYPARALWPTVMPTIAINKALLGKEKHESGMSRYKF) are cytoplasmic. A helical transmembrane segment spans residues 335–355 (FFLTFFIMFIYNWFPTYIINI). At 356–374 (LNTFNWMTWIKPSNINLAN) the chain is on the extracellular side. The N-linked (GlcNAc...) asparagine glycan is linked to asparagine 374. The chain crosses the membrane as a helical span at residues 375 to 395 (ITGGVTGLGINPISSFDWNVI). The Cytoplasmic portion of the chain corresponds to 396 to 404 (SFNSPLVYP). Residues 405–425 (FWSYLTQYLGCILAALIVIAV) form a helical membrane-spanning segment. At 426–480 (YYSNYMSCQYLPIFTNSLYTNTGHSFKVTEVLDSDNKLDVKKYQSYSPPYYSAGN) the chain is on the extracellular side. A helical transmembrane segment spans residues 481–501 (LVSYGAFICAYPLMITWSFIV). The Cytoplasmic portion of the chain corresponds to 502–553 (HSKLLFNAFKDWALNLWAMRKLKSWVTMFKSDYRALDDYDDPHSNAMKNYKE). Residues 554–574 (VPDWWYFAILIGSLVVGIAVV) traverse the membrane as a helical segment. Residues 575-582 (EHYPTNTP) lie on the Extracellular side of the membrane. A helical transmembrane segment spans residues 583 to 603 (VWGLFVCLGFNFVFLIPTTIL). Residues 604–614 (QATTGYSFGLN) lie on the Cytoplasmic side of the membrane. Residues 615 to 635 (LLIEMVMGYALPGNPIAIMIL) form a helical membrane-spanning segment. Over 636–671 (KAFGYNIDGQADNYVSNLKIAHYCKIPPMALFRGQC) the chain is Extracellular. Residues 672 to 692 (VIVFIQIFVNLGVLNWQISNI) form a helical membrane-spanning segment. The Cytoplasmic portion of the chain corresponds to 693–730 (KDFCTPHQNAKFTCPDAVTYYNASVVWGAIGPKRIFNY). Residues 731-751 (IYPIFKWCWLIGACIGIFFGV) traverse the membrane as a helical segment. Residues 752 to 766 (WKRWGKFYPRYFDPM) lie on the Extracellular side of the membrane. Residues 767 to 789 (LFVGGMLNMSPPYNLMYYTSGMI) traverse the membrane as a helical segment. Residues 790–811 (VSYISQYYMKRHHLNLWEKYNY) are Cytoplasmic-facing. A helical transmembrane segment spans residues 812–832 (VLSAGFSTGLVLSAIIIFFAV). Over 833-877 (QYKDTAFNWWGNTVPYAGADGVGYPLKNITDTANGYFGYAPGHYP) the chain is Extracellular. Asparagine 860 is a glycosylation site (N-linked (GlcNAc...) asparagine).

The protein belongs to the oligopeptide OPT transporter family.

It is found in the membrane. Functionally, transports tetra- and pentapeptides. Does not transport glutathione. This is Oligopeptide transporter 2 (OPT2) from Saccharomyces cerevisiae (strain ATCC 204508 / S288c) (Baker's yeast).